The following is a 1222-amino-acid chain: Chitin synthase 4 (1222 aa).

Disordered stretches follow at residues 1-101 and 138-200; these read MSLP…ERNR and TERT…KRIE. 2 stretches are compositionally biased toward polar residues: residues 11–24 and 42–77; these read QAYN…NSPS and NQAS…SPDG. Over residues 182–196 the composition is skewed to basic residues; the sequence is SGKIKRKSRRHSKPP. Helical transmembrane passes span 205–225 and 243–263; these read PPTF…GFIM and MGLI…TFGF. 3 N-linked (GlcNAc...) asparagine glycosylation sites follow: Asn378, Asn418, and Asn440. The chain crosses the membrane as a helical span at residues 513–533; that stretch reads ALILSVVGVRFFLAIIFQWFI. Positions 576-630 are disordered; that stretch reads TVYGSSDRSSKRASFLPTTSRFSSVGGPDIRSQGGRRMPTTMASQSTSNQLLTPN. The segment covering 616-630 has biased composition (polar residues); it reads TMASQSTSNQLLTPN. N-linked (GlcNAc...) asparagine glycans are attached at residues Asn637 and Asn1030. The next 3 membrane-spanning stretches (helical) occupy residues 1055-1075, 1089-1109, and 1113-1133; these read FIIF…AFTF, IIPL…VIIT, and WSYI…NFVL. The disordered stretch occupies residues 1202 to 1222; sequence GGQTWTSPPGHQYNEEYYSDA.

It belongs to the chitin synthase family. Class IV subfamily.

The protein localises to the cell membrane. It carries out the reaction [(1-&gt;4)-N-acetyl-beta-D-glucosaminyl](n) + UDP-N-acetyl-alpha-D-glucosamine = [(1-&gt;4)-N-acetyl-beta-D-glucosaminyl](n+1) + UDP + H(+). Functionally, polymerizes chitin, a structural polymer of the cell wall and septum, by transferring the sugar moiety of UDP-GlcNAc to the non-reducing end of the growing chitin polymer. Shows additive effects in septum formation with CHS1, CHS2, CHS3A, CHS5, CHS6 and CHS7. Regulates conidiation. Involved in virulence and mediates mycotoxin deoxinivalenol (DON) biosynthesis via the regulation of the expression of TRI4, TRI5 and TRI6. The protein is Chitin synthase 4 of Gibberella zeae (strain ATCC MYA-4620 / CBS 123657 / FGSC 9075 / NRRL 31084 / PH-1) (Wheat head blight fungus).